The primary structure comprises 32 residues: DTANDPKYGSQYAPQKVNADVDQGVXXXHPEL.

The tract at residues 1 to 32 is disordered; that stretch reads DTANDPKYGSQYAPQKVNADVDQGVXXXHPEL. Asp-22 (charge relay system) is an active-site residue.

It belongs to the peptidase S8 family.

The protein localises to the secreted. This is Secreted proteinase from Haloferax mediterranei (Halobacterium mediterranei).